Reading from the N-terminus, the 406-residue chain is Probable 2,3-bisphosphoglycerate-independent phosphoglycerate mutase (406 aa).

The protein belongs to the BPG-independent phosphoglycerate mutase family. A-PGAM subfamily.

The enzyme catalyses (2R)-2-phosphoglycerate = (2R)-3-phosphoglycerate. Its pathway is carbohydrate degradation; glycolysis; pyruvate from D-glyceraldehyde 3-phosphate: step 3/5. In terms of biological role, catalyzes the interconversion of 2-phosphoglycerate and 3-phosphoglycerate. The protein is Probable 2,3-bisphosphoglycerate-independent phosphoglycerate mutase of Thermus thermophilus (strain ATCC 27634 / DSM 579 / HB8).